The sequence spans 404 residues: Subtilisin-like protease 3 (404 aa).

Positions 1–20 (MLFSKSLVALVACFLPLIVS) are cleaved as a signal peptide. Positions 21–114 (ATELKLRNAA…VDKDVKVSAY (94 aa)) are excised as a propeptide. Residues 38-112 (SYIVVYKDID…AYVDKDVKVS (75 aa)) form the Inhibitor I9 domain. The Peptidase S8 domain maps to 123 to 404 (PWGLDRISHR…DNLAYNDDGY (282 aa)). Asn133 is a glycosylation site (N-linked (GlcNAc...) asparagine). Residues Asp158 and His190 each act as charge relay system in the active site. Asn243, Asn251, Asn286, Asn307, and Asn340 each carry an N-linked (GlcNAc...) asparagine glycan. Catalysis depends on Ser347, which acts as the Charge relay system. N-linked (GlcNAc...) asparagine glycosylation is present at Asn366.

It belongs to the peptidase S8 family.

It localises to the secreted. In terms of biological role, secreted subtilisin-like serine endopeptidase. Mediates the degradation of collagen, the major structural protein in the mammalian host. Degrades the nonhelical regions of collagen that function in the cross-linking of the helical components. May function as virulence factor involved in epidermal wing necrosis observed in white nose syndrome (WNS) in bats. The protein is Subtilisin-like protease 3 of Pseudogymnoascus destructans (strain ATCC MYA-4855 / 20631-21) (Bat white-nose syndrome fungus).